Consider the following 124-residue polypeptide: Glutaredoxin-2 (124 aa).

Residues Cys13 and Cys16 are joined by a disulfide bond.

It belongs to the glutaredoxin family. In terms of assembly, homodimer.

Its subcellular location is the host cytoplasm. Functionally, glutaredoxin necessary for virion morphogenesis and virus replication. Functions as a thiol-disulfide transfer protein between membrane-associated OPG128 and substrates OPG095 or OPG053. The complete pathway for formation of disulfide bonds in intracellular virion membrane proteins sequentially involves oxidation of OPG072, OPG128 and OPG088. Exhibit thioltransferase and dehydroascorbate reductase activities in vitro. This is Glutaredoxin-2 (OPG088) from Oryctolagus cuniculus (Rabbit).